Here is a 198-residue protein sequence, read N- to C-terminus: Probable GTP-binding protein EngB (198 aa).

One can recognise an EngB-type G domain in the interval 22–196 (NLSEIAFVGR…WNWIKGQAEL (175 aa)). GTP is bound by residues 30–37 (GRSNVGKS), 57–61 (GKTQT), 75–78 (DVPG), 142–145 (TKAD), and 175–177 (FSA). 2 residues coordinate Mg(2+): serine 37 and threonine 59.

Belongs to the TRAFAC class TrmE-Era-EngA-EngB-Septin-like GTPase superfamily. EngB GTPase family. The cofactor is Mg(2+).

Functionally, necessary for normal cell division and for the maintenance of normal septation. This chain is Probable GTP-binding protein EngB, found in Oenococcus oeni (strain ATCC BAA-331 / PSU-1).